A 516-amino-acid chain; its full sequence is Maturase K (516 aa).

The protein belongs to the intron maturase 2 family. MatK subfamily.

It localises to the plastid. Its subcellular location is the chloroplast. Usually encoded in the trnK tRNA gene intron. Probably assists in splicing its own and other chloroplast group II introns. This is Maturase K from Colchicum speciosum (Giant meadow saffron).